Consider the following 228-residue polypeptide: Protein-L-isoaspartate O-methyltransferase (228 aa).

Residue S74 is part of the active site.

It belongs to the methyltransferase superfamily. L-isoaspartyl/D-aspartyl protein methyltransferase family.

The protein localises to the cytoplasm. The catalysed reaction is [protein]-L-isoaspartate + S-adenosyl-L-methionine = [protein]-L-isoaspartate alpha-methyl ester + S-adenosyl-L-homocysteine. Catalyzes the methyl esterification of L-isoaspartyl residues in peptides and proteins that result from spontaneous decomposition of normal L-aspartyl and L-asparaginyl residues. It plays a role in the repair and/or degradation of damaged proteins. The protein is Protein-L-isoaspartate O-methyltransferase of Methylorubrum extorquens (strain PA1) (Methylobacterium extorquens).